We begin with the raw amino-acid sequence, 193 residues long: Peptidyl-tRNA hydrolase (193 aa).

Tyr17 provides a ligand contact to tRNA. Residue His22 is the Proton acceptor of the active site. 3 residues coordinate tRNA: Phe68, Asn70, and Asn116.

It belongs to the PTH family. In terms of assembly, monomer.

Its subcellular location is the cytoplasm. It catalyses the reaction an N-acyl-L-alpha-aminoacyl-tRNA + H2O = an N-acyl-L-amino acid + a tRNA + H(+). Its function is as follows. Hydrolyzes ribosome-free peptidyl-tRNAs (with 1 or more amino acids incorporated), which drop off the ribosome during protein synthesis, or as a result of ribosome stalling. In terms of biological role, catalyzes the release of premature peptidyl moieties from peptidyl-tRNA molecules trapped in stalled 50S ribosomal subunits, and thus maintains levels of free tRNAs and 50S ribosomes. This is Peptidyl-tRNA hydrolase from Acinetobacter baylyi (strain ATCC 33305 / BD413 / ADP1).